We begin with the raw amino-acid sequence, 95 residues long: Small ribosomal subunit protein uS19 (95 aa).

The segment at 73–95 (EFSPTRSYRGHGADKNAKGSKKK) is disordered.

It belongs to the universal ribosomal protein uS19 family.

In terms of biological role, protein S19 forms a complex with S13 that binds strongly to the 16S ribosomal RNA. The polypeptide is Small ribosomal subunit protein uS19 (Deinococcus deserti (strain DSM 17065 / CIP 109153 / LMG 22923 / VCD115)).